The chain runs to 213 residues: Orotate phosphoribosyltransferase (213 aa).

Residue K26 coordinates 5-phospho-alpha-D-ribose 1-diphosphate. 34-35 (FF) provides a ligand contact to orotate. 5-phospho-alpha-D-ribose 1-diphosphate is bound by residues 72-73 (YK), R99, K100, K103, H105, and 124-132 (DDVITAGTA). Residues T128 and R156 each contribute to the orotate site.

This sequence belongs to the purine/pyrimidine phosphoribosyltransferase family. PyrE subfamily. Homodimer. Mg(2+) is required as a cofactor.

The enzyme catalyses orotidine 5'-phosphate + diphosphate = orotate + 5-phospho-alpha-D-ribose 1-diphosphate. It functions in the pathway pyrimidine metabolism; UMP biosynthesis via de novo pathway; UMP from orotate: step 1/2. In terms of biological role, catalyzes the transfer of a ribosyl phosphate group from 5-phosphoribose 1-diphosphate to orotate, leading to the formation of orotidine monophosphate (OMP). This is Orotate phosphoribosyltransferase from Pseudomonas syringae pv. tomato (strain ATCC BAA-871 / DC3000).